The sequence spans 118 residues: Large ribosomal subunit protein bL20 (118 aa).

It belongs to the bacterial ribosomal protein bL20 family.

Binds directly to 23S ribosomal RNA and is necessary for the in vitro assembly process of the 50S ribosomal subunit. It is not involved in the protein synthesizing functions of that subunit. The protein is Large ribosomal subunit protein bL20 (rplT) of Aquifex aeolicus (strain VF5).